The primary structure comprises 658 residues: UvrABC system protein B (658 aa).

One can recognise a Helicase ATP-binding domain in the interval 25 to 416 (KSLKNNNHYQ…QKNVAEQIIR (392 aa)). 38–45 (GVTGSGKT) lines the ATP pocket. The Beta-hairpin signature appears at 91 to 114 (HFDYYQPESYIPRRDLFIEKDSSI). A Helicase C-terminal domain is found at 433–607 (QVQDLFDEIK…ELKLRDDEIK (175 aa)). The 36-residue stretch at 623–658 (EKIIKELDKKMRERAKNLDFEEAMRLRDEIAQLRTL) folds into the UVR domain.

This sequence belongs to the UvrB family. In terms of assembly, forms a heterotetramer with UvrA during the search for lesions. Interacts with UvrC in an incision complex.

It is found in the cytoplasm. Functionally, the UvrABC repair system catalyzes the recognition and processing of DNA lesions. A damage recognition complex composed of 2 UvrA and 2 UvrB subunits scans DNA for abnormalities. Upon binding of the UvrA(2)B(2) complex to a putative damaged site, the DNA wraps around one UvrB monomer. DNA wrap is dependent on ATP binding by UvrB and probably causes local melting of the DNA helix, facilitating insertion of UvrB beta-hairpin between the DNA strands. Then UvrB probes one DNA strand for the presence of a lesion. If a lesion is found the UvrA subunits dissociate and the UvrB-DNA preincision complex is formed. This complex is subsequently bound by UvrC and the second UvrB is released. If no lesion is found, the DNA wraps around the other UvrB subunit that will check the other stand for damage. This is UvrABC system protein B from Helicobacter pylori (strain J99 / ATCC 700824) (Campylobacter pylori J99).